The chain runs to 1050 residues: DNA ligase 4 (1050 aa).

The segment at 1-22 is disordered; the sequence is MNTNRRSRSPDEEALEEDQHQY. Positions 329, 331, 332, 336, 398, 438, 498, 503, 520, and 522 each coordinate ATP. The N6-AMP-lysine intermediate role is filled by K331. Mg(2+) is bound at residue E398. E498 lines the Mg(2+) pocket. The segment covering 691 to 702 has biased composition (basic and acidic residues); that stretch reads QEQERKKMEMEN. The interval 691 to 711 is disordered; it reads QEQERKKMEMENRKRKPATKR. 2 consecutive BRCT domains span residues 742–840 and 936–1049; these read ASKR…KENK and LRSF…EYVA.

It belongs to the ATP-dependent DNA ligase family. Requires Mg(2+) as cofactor.

Its subcellular location is the nucleus. The catalysed reaction is ATP + (deoxyribonucleotide)n-3'-hydroxyl + 5'-phospho-(deoxyribonucleotide)m = (deoxyribonucleotide)n+m + AMP + diphosphate.. DNA ligase involved in DNA non-homologous end joining (NHEJ); required for double-strand break (DSB) repair. The protein is DNA ligase 4 (mus-53) of Neurospora crassa (strain ATCC 24698 / 74-OR23-1A / CBS 708.71 / DSM 1257 / FGSC 987).